Here is a 193-residue protein sequence, read N- to C-terminus: Capsid protein (193 aa).

In terms of processing, the N-terminus is blocked.

It is found in the virion. The protein is Capsid protein of Crataegus (hawthorn).